The following is an 881-amino-acid chain: Alanine--tRNA ligase (881 aa).

Residues histidine 565, histidine 569, cysteine 672, and histidine 676 each coordinate Zn(2+).

This sequence belongs to the class-II aminoacyl-tRNA synthetase family. Requires Zn(2+) as cofactor.

It localises to the cytoplasm. The catalysed reaction is tRNA(Ala) + L-alanine + ATP = L-alanyl-tRNA(Ala) + AMP + diphosphate. In terms of biological role, catalyzes the attachment of alanine to tRNA(Ala) in a two-step reaction: alanine is first activated by ATP to form Ala-AMP and then transferred to the acceptor end of tRNA(Ala). Also edits incorrectly charged Ser-tRNA(Ala) and Gly-tRNA(Ala) via its editing domain. This Novosphingobium aromaticivorans (strain ATCC 700278 / DSM 12444 / CCUG 56034 / CIP 105152 / NBRC 16084 / F199) protein is Alanine--tRNA ligase.